Reading from the N-terminus, the 472-residue chain is Inactive CLIP domain-containing serine protease A3 (472 aa).

Transmembrane regions (helical) follow at residues 51–71 (ISFVMCAIYYLQLYIKAWSSM) and 78–98 (LPALGVLILLGTTWTPVHTYA). 4 N-linked (GlcNAc...) asparagine glycosylation sites follow: Asn-122, Asn-133, Asn-149, and Asn-152. The Peptidase S1 domain occupies 223-470 (VAAAKAPAAG…YVPWITSTVS (248 aa)). 3 cysteine pairs are disulfide-bonded: Cys-354-Cys-428, Cys-386-Cys-408, and Cys-418-Cys-446.

It belongs to the peptidase S1 family. CLIP subfamily. In terms of tissue distribution, expressed at highest levels in head and salivary gland. Expressed in ovary and carcass. Minimal expression in midgut.

Its subcellular location is the membrane. In terms of biological role, probable inactive serine protease. Induces migration of cultured mouse embryonic fibroblasts. (Microbial infection) Promotes dengue virus type 2 replication in the host. The protein is Inactive CLIP domain-containing serine protease A3 of Aedes aegypti (Yellowfever mosquito).